We begin with the raw amino-acid sequence, 485 residues long: Aldehyde dehydrogenase family 3 member A2 (485 aa).

Residues 1 to 463 (MEREVQRVRQ…FLLRRFNKEK (463 aa)) lie on the Cytoplasmic side of the membrane. 185 to 190 (GNTAVG) lines the NAD(+) pocket. Residues E207 and C241 contribute to the active site. S293 is modified (phosphoserine). A helical transmembrane segment spans residues 464–484 (LGLLVLTFLGIVAAVLVNAGY). The Prevents secretion from ER motif lies at 481–484 (NAGY).

It belongs to the aldehyde dehydrogenase family. Homodimer.

Its subcellular location is the microsome membrane. The protein localises to the endoplasmic reticulum membrane. The enzyme catalyses an aldehyde + NAD(+) + H2O = a carboxylate + NADH + 2 H(+). It carries out the reaction a fatty aldehyde + NAD(+) + H2O = a fatty acid + NADH + 2 H(+). It catalyses the reaction (2E)-hexadecenal + NAD(+) + H2O = (E)-hexadec-2-enoate + NADH + 2 H(+). The catalysed reaction is hexadecanoate + NADH + 2 H(+) = hexadecanal + NAD(+) + H2O. The enzyme catalyses 22-oxodocosanoate + NAD(+) + H2O = docosanedioate + NADH + 2 H(+). It carries out the reaction 2,6,10,14-tetramethylpentadecanal + NAD(+) + H2O = 2,6,10,14-tetramethylpentadecanoate + NADH + 2 H(+). It catalyses the reaction octadecanal + NAD(+) + H2O = octadecanoate + NADH + 2 H(+). The catalysed reaction is dodecanoate + NADH + 2 H(+) = dodecanal + NAD(+) + H2O. The enzyme catalyses decanal + NAD(+) + H2O = decanoate + NADH + 2 H(+). It carries out the reaction tetradecanal + NAD(+) + H2O = tetradecanoate + NADH + 2 H(+). It catalyses the reaction octanal + NAD(+) + H2O = octanoate + NADH + 2 H(+). The catalysed reaction is heptanal + NAD(+) + H2O = heptanoate + NADH + 2 H(+). The enzyme catalyses (2E,6E)-farnesal + NAD(+) + H2O = (2E,6E)-farnesoate + NADH + 2 H(+). Functionally, catalyzes the oxidation of medium and long-chain aliphatic aldehydes to fatty acids. Active on a variety of saturated and unsaturated aliphatic aldehydes between 6 and 24 carbons in length. Responsible for conversion of the sphingosine 1-phosphate (S1P) degradation product hexadecenal to hexadecenoic acid. The sequence is that of Aldehyde dehydrogenase family 3 member A2 (ALDH3A2) from Macaca fascicularis (Crab-eating macaque).